The chain runs to 678 residues: MPPGRPEVYQERFDIVQPHCSSEHTISLNTDFSKAAFGSATGLVAKAASQTTTAIWNLHADAHDFSNSSYLSKQVFAANLAHIGVAFIWLSGMHFHGAYFSNYLDWLQDPSIAPTAQQVSNIANQSVLNPIRVTSGFFNLWLAEGITSTYQLKVIAAFGLIASALCFLGSYFHMHSSTSFTRVLNTKLTSLSTHHLVGLLGLGSLAWAGHLIHISLPVNILMNAGVAVPSPHSLLSSKAVATIVEQLSFSALTSSDGYVWQPLVYSAMHHFALALVLIVGSVLGPLSTASNPLMSFTVGSSWHLVLGVQLFVTGTASVLYAQMSNAYPVYPYLLTDHPTVVSLFVHHMWIGGFFLVGAFAHLSIGLVRDTLPQSFSVVLTQRDIILGHLTWVVAFLGVHSFGLYVHNDTMQALGRPDDMFSDNAISLLPVFARWSTLTLNSTGSAVSVLGVELSTADFMVTHIHAFTIHTTVLILVKGFLYARSSRLVNDKYKLDFRYPCDGPGRGGTCQISPWDHVFLGLFWMYNSISVVIFHFFWEYQSNLASIKASAGGSIRALASDFELNSINTNGWLRNFLWSGAAQVIQSYGSPLAAYGLTFPASHFVWALSLMFLFSGRGYWQELIESVLWAHHKLYVVPHIQPRALSITSGRAVGFTHYLLGGIGSTWSFFLARIVATAG.

A run of 8 helical transmembrane segments spans residues 75–98, 152–175, 192–216, 266–284, 302–325, 341–367, 384–406, and 458–476; these read VFAANLAHIGVAFIWLSGMHFHGA, LKVIAAFGLIASALCFLGSYFHMH, STHHLVGLLGLGSLAWAGHLIHISL, SAMHHFALALVLIVGSVLG, WHLVLGVQLFVTGTASVLYAQMSN, VSLFVHHMWIGGFFLVGAFAHLSIGLV, IILGHLTWVVAFLGVHSFGLYVH, and FMVTHIHAFTIHTTVLILV. [4Fe-4S] cluster is bound by residues C500 and C509. A run of 2 helical transmembrane segments spans residues 516-537 and 591-613; these read HVFLGLFWMYNSISVVIFHFFW and LAAYGLTFPASHFVWALSLMFLF. H602 contributes to the chlorophyll a' binding site. Positions 610 and 618 each coordinate chlorophyll a. W619 contacts phylloquinone. The helical transmembrane segment at 651-671 threads the bilayer; it reads AVGFTHYLLGGIGSTWSFFLA.

It belongs to the PsaA/PsaB family. The PsaA/B heterodimer binds the P700 chlorophyll special pair and subsequent electron acceptors. PSI consists of a core antenna complex that captures photons, and an electron transfer chain that converts photonic excitation into a charge separation. The eukaryotic PSI reaction center is composed of at least 11 subunits. The cofactor is P700 is a chlorophyll a/chlorophyll a' dimer, A0 is one or more chlorophyll a, A1 is one or both phylloquinones and FX is a shared 4Fe-4S iron-sulfur center..

It localises to the plastid. It is found in the chloroplast thylakoid membrane. It catalyses the reaction reduced [plastocyanin] + hnu + oxidized [2Fe-2S]-[ferredoxin] = oxidized [plastocyanin] + reduced [2Fe-2S]-[ferredoxin]. Its function is as follows. PsaA and PsaB bind P700, the primary electron donor of photosystem I (PSI), as well as the electron acceptors A0, A1 and FX. PSI is a plastocyanin/cytochrome c6-ferredoxin oxidoreductase, converting photonic excitation into a charge separation, which transfers an electron from the donor P700 chlorophyll pair to the spectroscopically characterized acceptors A0, A1, FX, FA and FB in turn. Oxidized P700 is reduced on the lumenal side of the thylakoid membrane by plastocyanin or cytochrome c6. The protein is Photosystem I P700 chlorophyll a apoprotein A1 of Amphidinium carterae (Dinoflagellate).